Consider the following 128-residue polypeptide: Sulfurtransferase TusD (128 aa).

Residue cysteine 78 is the Cysteine persulfide intermediate of the active site.

This sequence belongs to the DsrE/TusD family. Heterohexamer, formed by a dimer of trimers. The hexameric TusBCD complex contains 2 copies each of TusB, TusC and TusD. The TusBCD complex interacts with TusE.

It is found in the cytoplasm. Its function is as follows. Part of a sulfur-relay system required for 2-thiolation of 5-methylaminomethyl-2-thiouridine (mnm(5)s(2)U) at tRNA wobble positions. Accepts sulfur from TusA and transfers it in turn to TusE. This Escherichia coli (strain 55989 / EAEC) protein is Sulfurtransferase TusD.